Here is a 201-residue protein sequence, read N- to C-terminus: ATP-dependent Clp protease proteolytic subunit (201 aa).

Ser98 serves as the catalytic Nucleophile. Residue His123 is part of the active site.

The protein belongs to the peptidase S14 family. Fourteen ClpP subunits assemble into 2 heptameric rings which stack back to back to give a disk-like structure with a central cavity, resembling the structure of eukaryotic proteasomes.

The protein resides in the cytoplasm. The catalysed reaction is Hydrolysis of proteins to small peptides in the presence of ATP and magnesium. alpha-casein is the usual test substrate. In the absence of ATP, only oligopeptides shorter than five residues are hydrolyzed (such as succinyl-Leu-Tyr-|-NHMec, and Leu-Tyr-Leu-|-Tyr-Trp, in which cleavage of the -Tyr-|-Leu- and -Tyr-|-Trp bonds also occurs).. Cleaves peptides in various proteins in a process that requires ATP hydrolysis. Has a chymotrypsin-like activity. Plays a major role in the degradation of misfolded proteins. This is ATP-dependent Clp protease proteolytic subunit from Rickettsia peacockii (strain Rustic).